The following is a 77-amino-acid chain: Small ribosomal subunit protein bS20 (77 aa).

This sequence belongs to the bacterial ribosomal protein bS20 family.

In terms of biological role, binds directly to 16S ribosomal RNA. The protein is Small ribosomal subunit protein bS20 of Lactococcus lactis subsp. lactis (strain IL1403) (Streptococcus lactis).